A 452-amino-acid polypeptide reads, in one-letter code: Na(+)/H(+) antiporter NhaA (452 aa).

The next 11 helical transmembrane spans lie at M23–I43, L71–I91, L108–V128, G136–G156, V165–F185, H189–G209, L216–H236, I316–G336, V349–V369, L385–L405, and E418–L438.

The protein belongs to the NhaA Na(+)/H(+) (TC 2.A.33) antiporter family.

It is found in the cell inner membrane. It catalyses the reaction Na(+)(in) + 2 H(+)(out) = Na(+)(out) + 2 H(+)(in). Na(+)/H(+) antiporter that extrudes sodium in exchange for external protons. In Porphyromonas gingivalis (strain ATCC 33277 / DSM 20709 / CIP 103683 / JCM 12257 / NCTC 11834 / 2561), this protein is Na(+)/H(+) antiporter NhaA.